We begin with the raw amino-acid sequence, 249 residues long: MTRKLVLLRHGQSQWNLDNRFTGWVDVDLTEQGRQEAAAAGKLMKDEGLQFDVAYTSVLKRAIHTLQGALKELDQDWLPVHKSWRLNERHYGGLQGLDKAETAAKHGEEQVKIWRRSYDIPPPAMDVTDPGHPGHDRRYATLDRNALPGTESLATTLVRVLPYWHDAIAPQLKAGQTVLVTAHGNSLRALYKYLNDISNAQILELNIPTGIPLLFELDDNLQVQSYRYLGDPEAAKRAAEAVANQGKAK.

Substrate-binding positions include 9-16, 22-23, Arg-61, 88-91, Lys-99, 115-116, and 184-185; these read RHGQSQWN, TG, ERHY, RR, and GN. The Tele-phosphohistidine intermediate role is filled by His-10. The active-site Proton donor/acceptor is Glu-88.

The protein belongs to the phosphoglycerate mutase family. BPG-dependent PGAM subfamily. As to quaternary structure, homodimer.

It catalyses the reaction (2R)-2-phosphoglycerate = (2R)-3-phosphoglycerate. Its pathway is carbohydrate degradation; glycolysis; pyruvate from D-glyceraldehyde 3-phosphate: step 3/5. In terms of biological role, catalyzes the interconversion of 2-phosphoglycerate and 3-phosphoglycerate. The polypeptide is 2,3-bisphosphoglycerate-dependent phosphoglycerate mutase (Xanthomonas campestris pv. campestris (strain 8004)).